The following is a 490-amino-acid chain: AP-5 complex subunit mu-1 (490 aa).

The MHD domain maps to 206–476 (KPQVSISITE…LISSDYYIWN (271 aa)).

It belongs to the adaptor complexes medium subunit family. In terms of assembly, probably part of the adaptor protein complex 5 (AP-5) a tetramer composed of AP5B1, AP5M1, AP5S1 and AP5Z1.

The protein resides in the cytoplasm. Its subcellular location is the cytosol. It localises to the late endosome membrane. It is found in the lysosome membrane. Functionally, as part of AP-5, a probable fifth adaptor protein complex it may be involved in endosomal transport. The sequence is that of AP-5 complex subunit mu-1 (AP5M1) from Bos taurus (Bovine).